Consider the following 462-residue polypeptide: 2-(3-amino-3-carboxypropyl)histidine synthase subunit 1 (462 aa).

Residues 1–87 are disordered; that stretch reads MEEDRRQTDL…AVATAKPRRA (87 aa). Positions 35-44 are enriched in polar residues; that stretch reads ESAAQTQNGA. The [4Fe-4S] cluster site is built by Cys-173, Cys-276, and Cys-406.

Belongs to the DPH1/DPH2 family. DPH1 subfamily. In terms of assembly, component of the 2-(3-amino-3-carboxypropyl)histidine synthase complex composed of DPH1, DPH2, DPH3 and a NADH-dependent reductase, predominantly CBR1. It depends on [4Fe-4S] cluster as a cofactor.

It is found in the cytoplasm. The enzyme catalyses L-histidyl-[translation elongation factor 2] + S-adenosyl-L-methionine = 2-[(3S)-amino-3-carboxypropyl]-L-histidyl-[translation elongation factor 2] + S-methyl-5'-thioadenosine + H(+). It participates in protein modification; peptidyl-diphthamide biosynthesis. Catalyzes the first step of diphthamide biosynthesis, a post-translational modification of histidine which occurs in elongation factor 2. DPH1 and DPH2 transfer a 3-amino-3-carboxypropyl (ACP) group from S-adenosyl-L-methionine (SAM) to a histidine residue, the reaction is assisted by a reduction system comprising DPH3 and a NADH-dependent reductase, predominantly CBR1. In Gibberella zeae (strain ATCC MYA-4620 / CBS 123657 / FGSC 9075 / NRRL 31084 / PH-1) (Wheat head blight fungus), this protein is 2-(3-amino-3-carboxypropyl)histidine synthase subunit 1 (DPH1).